The following is a 258-amino-acid chain: Type III pantothenate kinase (258 aa).

6–13 contacts ATP; sequence DVGNTNIV. Substrate-binding positions include Tyr100 and 107–110; that span reads GADR. Catalysis depends on Asp109, which acts as the Proton acceptor. Asp129 serves as a coordination point for K(+). Thr132 contributes to the ATP binding site. Thr184 is a substrate binding site.

The protein belongs to the type III pantothenate kinase family. Homodimer. NH4(+) serves as cofactor. K(+) is required as a cofactor.

It localises to the cytoplasm. It catalyses the reaction (R)-pantothenate + ATP = (R)-4'-phosphopantothenate + ADP + H(+). Its pathway is cofactor biosynthesis; coenzyme A biosynthesis; CoA from (R)-pantothenate: step 1/5. Its function is as follows. Catalyzes the phosphorylation of pantothenate (Pan), the first step in CoA biosynthesis. The chain is Type III pantothenate kinase from Clostridium botulinum (strain Kyoto / Type A2).